Consider the following 353-residue polypeptide: tRNA-specific 2-thiouridylase MnmA (353 aa).

Residues 7–14 (GLSGGVDS) and L33 contribute to the ATP site. Catalysis depends on C94, which acts as the Nucleophile. A disulfide bridge connects residues C94 and C193. Residue G119 coordinates ATP. An interaction with tRNA region spans residues 143 to 145 (KDQ). Residue C193 is the Cysteine persulfide intermediate of the active site. The segment at 298–299 (RY) is interaction with tRNA.

The protein belongs to the MnmA/TRMU family.

It is found in the cytoplasm. It carries out the reaction S-sulfanyl-L-cysteinyl-[protein] + uridine(34) in tRNA + AH2 + ATP = 2-thiouridine(34) in tRNA + L-cysteinyl-[protein] + A + AMP + diphosphate + H(+). Its function is as follows. Catalyzes the 2-thiolation of uridine at the wobble position (U34) of tRNA, leading to the formation of s(2)U34. This chain is tRNA-specific 2-thiouridylase MnmA, found in Picosynechococcus sp. (strain ATCC 27264 / PCC 7002 / PR-6) (Agmenellum quadruplicatum).